The sequence spans 338 residues: Aspartate-semialdehyde dehydrogenase (338 aa).

NADP(+)-binding positions include 13 to 16 (TGNV) and 41 to 42 (NS). Residue Arg-101 coordinates phosphate. The active-site Acyl-thioester intermediate is Cys-132. Gln-159 contacts substrate. 162–163 (SG) is a binding site for NADP(+). Lys-216 serves as a coordination point for phosphate. Arg-237 serves as a coordination point for substrate. His-244 serves as the catalytic Proton acceptor. Residue Asn-317 coordinates NADP(+).

This sequence belongs to the aspartate-semialdehyde dehydrogenase family. Homodimer.

The enzyme catalyses L-aspartate 4-semialdehyde + phosphate + NADP(+) = 4-phospho-L-aspartate + NADPH + H(+). Its pathway is amino-acid biosynthesis; L-lysine biosynthesis via DAP pathway; (S)-tetrahydrodipicolinate from L-aspartate: step 2/4. It functions in the pathway amino-acid biosynthesis; L-methionine biosynthesis via de novo pathway; L-homoserine from L-aspartate: step 2/3. The protein operates within amino-acid biosynthesis; L-threonine biosynthesis; L-threonine from L-aspartate: step 2/5. Catalyzes the NADPH-dependent formation of L-aspartate-semialdehyde (L-ASA) by the reductive dephosphorylation of L-aspartyl-4-phosphate. In Rickettsia bellii (strain RML369-C), this protein is Aspartate-semialdehyde dehydrogenase.